A 147-amino-acid chain; its full sequence is Ribonuclease H (147 aa).

Positions 8, 46, 68, and 132 each coordinate Mg(2+).

Belongs to the RNase H family. As to quaternary structure, monomer. Mg(2+) serves as cofactor.

Its subcellular location is the cytoplasm. It catalyses the reaction Endonucleolytic cleavage to 5'-phosphomonoester.. In terms of biological role, endonuclease that specifically degrades the RNA of RNA-DNA hybrids. The polypeptide is Ribonuclease H (Geotalea uraniireducens (strain Rf4) (Geobacter uraniireducens)).